The chain runs to 445 residues: Glycine--tRNA ligase (445 aa).

The substrate site is built by R97 and E145. ATP contacts are provided by residues 177 to 179 (RNE), 187 to 192 (FRTCEF), 262 to 263 (EV), and 308 to 311 (GLTR). 192–196 (FEQME) contributes to the substrate binding site. 304 to 308 (ETSAG) contacts substrate.

This sequence belongs to the class-II aminoacyl-tRNA synthetase family. Homodimer.

It is found in the cytoplasm. It carries out the reaction tRNA(Gly) + glycine + ATP = glycyl-tRNA(Gly) + AMP + diphosphate. Functionally, catalyzes the attachment of glycine to tRNA(Gly). The polypeptide is Glycine--tRNA ligase (Borreliella burgdorferi (strain ZS7) (Borrelia burgdorferi)).